The sequence spans 212 residues: Ribonuclease HII (212 aa).

The region spanning 17-211 is the RNase H type-2 domain; sequence RVLAGIDEAG…VLELLDLTDS (195 aa). The a divalent metal cation site is built by D23, E24, and D120.

It belongs to the RNase HII family. The cofactor is Mn(2+). Mg(2+) is required as a cofactor.

Its subcellular location is the cytoplasm. The catalysed reaction is Endonucleolytic cleavage to 5'-phosphomonoester.. In terms of biological role, endonuclease that specifically degrades the RNA of RNA-DNA hybrids. The protein is Ribonuclease HII of Chloroflexus aggregans (strain MD-66 / DSM 9485).